Reading from the N-terminus, the 354-residue chain is Anthranilate phosphoribosyltransferase (354 aa).

Belongs to the anthranilate phosphoribosyltransferase family.

The enzyme catalyses N-(5-phospho-beta-D-ribosyl)anthranilate + diphosphate = 5-phospho-alpha-D-ribose 1-diphosphate + anthranilate. The protein operates within amino-acid biosynthesis; L-tryptophan biosynthesis; L-tryptophan from chorismate: step 2/5. In Schizosaccharomyces pombe (strain 972 / ATCC 24843) (Fission yeast), this protein is Anthranilate phosphoribosyltransferase (trp4).